A 465-amino-acid polypeptide reads, in one-letter code: Cysteine--tRNA ligase (465 aa).

Cys28 serves as a coordination point for Zn(2+). Residues 30–40 (MTVYDYCHLGH) carry the 'HIGH' region motif. Residues Cys209, His234, and Glu238 each contribute to the Zn(2+) site. The 'KMSKS' region motif lies at 266–270 (KMSKS). Position 269 (Lys269) interacts with ATP.

The protein belongs to the class-I aminoacyl-tRNA synthetase family. Monomer. The cofactor is Zn(2+).

It localises to the cytoplasm. It carries out the reaction tRNA(Cys) + L-cysteine + ATP = L-cysteinyl-tRNA(Cys) + AMP + diphosphate. The polypeptide is Cysteine--tRNA ligase (Nitrosomonas europaea (strain ATCC 19718 / CIP 103999 / KCTC 2705 / NBRC 14298)).